Here is a 302-residue protein sequence, read N- to C-terminus: Sulfate adenylyltransferase subunit 2 (302 aa).

A disordered region spans residues 279–302 (ERQGRAIDHDQSGSMELKKRQGYF). Over residues 280-302 (RQGRAIDHDQSGSMELKKRQGYF) the composition is skewed to basic and acidic residues.

It belongs to the PAPS reductase family. CysD subfamily. In terms of assembly, heterodimer composed of CysD, the smaller subunit, and CysN.

It catalyses the reaction sulfate + ATP + H(+) = adenosine 5'-phosphosulfate + diphosphate. It participates in sulfur metabolism; hydrogen sulfide biosynthesis; sulfite from sulfate: step 1/3. Its function is as follows. With CysN forms the ATP sulfurylase (ATPS) that catalyzes the adenylation of sulfate producing adenosine 5'-phosphosulfate (APS) and diphosphate, the first enzymatic step in sulfur assimilation pathway. APS synthesis involves the formation of a high-energy phosphoric-sulfuric acid anhydride bond driven by GTP hydrolysis by CysN coupled to ATP hydrolysis by CysD. This chain is Sulfate adenylyltransferase subunit 2, found in Photobacterium profundum (strain SS9).